The chain runs to 357 residues: DNA replication and repair protein RecF (357 aa).

30-37 (GANGSGKT) lines the ATP pocket.

Belongs to the RecF family.

It localises to the cytoplasm. Its function is as follows. The RecF protein is involved in DNA metabolism; it is required for DNA replication and normal SOS inducibility. RecF binds preferentially to single-stranded, linear DNA. It also seems to bind ATP. This chain is DNA replication and repair protein RecF, found in Salmonella paratyphi B (strain ATCC BAA-1250 / SPB7).